The primary structure comprises 464 residues: Protein FAM90A20 (464 aa).

6 disordered regions span residues 16 to 42, 71 to 213, 228 to 247, 254 to 273, 309 to 389, and 418 to 437; these read RAQTLQKQRRAPVGPRAPPPDEEDPRL, ATLG…IPRP, PTHSSPEGSCREVPQAASKT, VRTQAQDKRPAVTSQPCPSA, RLGP…HDGA, and EKPGAFLAQSPHVSEKSEAP. 2 stretches are compositionally biased toward basic and acidic residues: residues 74–83 and 97–114; these read GKKEGKENLK and NKDKGEKEERPRQQDPQR. Low complexity predominate over residues 180-197; the sequence is LASLSPLRKASLSSSSSL.

Belongs to the FAM90 family.

This Homo sapiens (Human) protein is Protein FAM90A20.